Reading from the N-terminus, the 306-residue chain is Dermonecrotic toxin LiSicTox-alphaIA2bi (306 aa).

Positions 1–18 (MLPYIALILVCWSVLSQA) are cleaved as a signal peptide. The propeptide occupies 19-26 (AQTDVEGR). The active site involves H38. Mg(2+) is bound by residues E58 and D60. Catalysis depends on H74, which acts as the Nucleophile. Disulfide bonds link C78-C84 and C80-C223. Residue D118 coordinates Mg(2+). The N-linked (GlcNAc...) asparagine glycan is linked to N283.

This sequence belongs to the arthropod phospholipase D family. Class II subfamily. Requires Mg(2+) as cofactor. Expressed by the venom gland.

The protein localises to the secreted. The enzyme catalyses an N-(acyl)-sphingosylphosphocholine = an N-(acyl)-sphingosyl-1,3-cyclic phosphate + choline. It catalyses the reaction an N-(acyl)-sphingosylphosphoethanolamine = an N-(acyl)-sphingosyl-1,3-cyclic phosphate + ethanolamine. The catalysed reaction is a 1-acyl-sn-glycero-3-phosphocholine = a 1-acyl-sn-glycero-2,3-cyclic phosphate + choline. It carries out the reaction a 1-acyl-sn-glycero-3-phosphoethanolamine = a 1-acyl-sn-glycero-2,3-cyclic phosphate + ethanolamine. In terms of biological role, dermonecrotic toxins cleave the phosphodiester linkage between the phosphate and headgroup of certain phospholipids (sphingolipid and lysolipid substrates), forming an alcohol (often choline) and a cyclic phosphate. This toxin acts on sphingomyelin (SM). It may also act on ceramide phosphoethanolamine (CPE), lysophosphatidylcholine (LPC) and lysophosphatidylethanolamine (LPE), but not on lysophosphatidylserine (LPS), and lysophosphatidylglycerol (LPG). It acts by transphosphatidylation, releasing exclusively cyclic phosphate products as second products. Induces dermonecrosis, hemolysis, increased vascular permeability, edema, inflammatory response, and platelet aggregation. This is Dermonecrotic toxin LiSicTox-alphaIA2bi from Loxosceles intermedia (Brown spider).